The following is a 295-amino-acid chain: Small ribosomal subunit protein uS2 (295 aa).

A disordered region spans residues Lys263–Ala295.

Belongs to the universal ribosomal protein uS2 family.

This Rickettsia massiliae (strain Mtu5) protein is Small ribosomal subunit protein uS2.